Reading from the N-terminus, the 424-residue chain is Phosphoribosylamine--glycine ligase (424 aa).

The ATP-grasp domain occupies 107 to 313; the sequence is KTFMKKYGIP…FLETLLNFYE (207 aa). 133–194 is a binding site for ATP; sequence VEKVGAPIVV…EEFLEGEEAS (62 aa). Mg(2+)-binding residues include glutamate 283 and asparagine 285.

This sequence belongs to the GARS family. Requires Mg(2+) as cofactor. The cofactor is Mn(2+).

The enzyme catalyses 5-phospho-beta-D-ribosylamine + glycine + ATP = N(1)-(5-phospho-beta-D-ribosyl)glycinamide + ADP + phosphate + H(+). Its pathway is purine metabolism; IMP biosynthesis via de novo pathway; N(1)-(5-phospho-D-ribosyl)glycinamide from 5-phospho-alpha-D-ribose 1-diphosphate: step 2/2. The polypeptide is Phosphoribosylamine--glycine ligase (Aquifex aeolicus (strain VF5)).